The chain runs to 431 residues: Hydroxylamine reductase (431 aa).

[4Fe-4S] cluster-binding residues include Cys5, Cys8, Cys17, and Cys23. 8 residues coordinate hybrid [4Fe-2O-2S] cluster: His131, Glu155, Cys199, Cys286, Cys314, Cys339, Glu373, and Lys375. Cys286 is subject to Cysteine persulfide.

This sequence belongs to the HCP family. It depends on [4Fe-4S] cluster as a cofactor. Hybrid [4Fe-2O-2S] cluster is required as a cofactor.

The protein localises to the cytoplasm. It catalyses the reaction A + NH4(+) + H2O = hydroxylamine + AH2 + H(+). Catalyzes the reduction of hydroxylamine to form NH(3) and H(2)O. In Thermotoga maritima (strain ATCC 43589 / DSM 3109 / JCM 10099 / NBRC 100826 / MSB8), this protein is Hydroxylamine reductase.